Consider the following 588-residue polypeptide: uncharacterized protein (588 aa).

This is an uncharacterized protein from Schizosaccharomyces pombe (strain 972 / ATCC 24843) (Fission yeast).